The sequence spans 93 residues: C-C motif chemokine 3 (93 aa).

The N-terminal stretch at 1 to 24 (MKVAVAALAVLLCAMALCSQVFSA) is a signal peptide. Disulfide bonds link Cys34–Cys58 and Cys35–Cys74.

Belongs to the intercrine beta (chemokine CC) family. In terms of assembly, self-associates. Also heterodimer of MIP-1-alpha(4-69) and MIP-1-beta(3-69). Interacts with CCR1.

The protein resides in the secreted. Monokine with inflammatory and chemokinetic properties. Binds to CCR1, CCR4 and CCR5. One of the major HIV-suppressive factors produced by CD8+ T-cells. Recombinant MIP-1-alpha induces a dose-dependent inhibition of different strains of HIV-1, HIV-2, and simian immunodeficiency virus (SIV). This Bos taurus (Bovine) protein is C-C motif chemokine 3 (CCL3).